The primary structure comprises 89 residues: uncharacterized protein (89 aa).

It to Rhizobium NGR234A y4oN.

This is an uncharacterized protein from Sinorhizobium fredii (strain NBRC 101917 / NGR234).